We begin with the raw amino-acid sequence, 400 residues long: Arabinan endo-1,5-alpha-L-arabinosidase B (400 aa).

The signal sequence occupies residues 1 to 16; it reads MAVIFVLFFLVSMALS. A glycan (N-linked (GlcNAc...) asparagine) is linked at asparagine 24. Aspartate 70 serves as the catalytic Proton acceptor. Residue asparagine 184 is glycosylated (N-linked (GlcNAc...) asparagine). Glutamate 277 functions as the Proton donor in the catalytic mechanism. N-linked (GlcNAc...) asparagine glycosylation is present at asparagine 372.

It belongs to the glycosyl hydrolase 43 family.

It is found in the secreted. It carries out the reaction Endohydrolysis of (1-&gt;5)-alpha-arabinofuranosidic linkages in (1-&gt;5)-arabinans.. It participates in glycan metabolism; L-arabinan degradation. Endo-1,5-alpha-L-arabinanase involved in degradation of pectin. Its preferred substrate is linear 1,5-alpha-L-arabinan. This chain is Arabinan endo-1,5-alpha-L-arabinosidase B (abnB), found in Emericella nidulans (strain FGSC A4 / ATCC 38163 / CBS 112.46 / NRRL 194 / M139) (Aspergillus nidulans).